The sequence spans 507 residues: Histidine ammonia-lyase (507 aa).

Residues 141–143 constitute a cross-link (5-imidazolinone (Ala-Gly)); that stretch reads ASG. Ser-142 is subject to 2,3-didehydroalanine (Ser).

This sequence belongs to the PAL/histidase family. Post-translationally, contains an active site 4-methylidene-imidazol-5-one (MIO), which is formed autocatalytically by cyclization and dehydration of residues Ala-Ser-Gly.

The protein resides in the cytoplasm. The enzyme catalyses L-histidine = trans-urocanate + NH4(+). It functions in the pathway amino-acid degradation; L-histidine degradation into L-glutamate; N-formimidoyl-L-glutamate from L-histidine: step 1/3. In Cereibacter sphaeroides (strain ATCC 17023 / DSM 158 / JCM 6121 / CCUG 31486 / LMG 2827 / NBRC 12203 / NCIMB 8253 / ATH 2.4.1.) (Rhodobacter sphaeroides), this protein is Histidine ammonia-lyase.